A 485-amino-acid polypeptide reads, in one-letter code: Glutamyl-tRNA(Gln) amidotransferase subunit A (485 aa).

Catalysis depends on charge relay system residues Lys78 and Ser153. The active-site Acyl-ester intermediate is Ser177.

The protein belongs to the amidase family. GatA subfamily. Heterotrimer of A, B and C subunits.

The enzyme catalyses L-glutamyl-tRNA(Gln) + L-glutamine + ATP + H2O = L-glutaminyl-tRNA(Gln) + L-glutamate + ADP + phosphate + H(+). Functionally, allows the formation of correctly charged Gln-tRNA(Gln) through the transamidation of misacylated Glu-tRNA(Gln) in organisms which lack glutaminyl-tRNA synthetase. The reaction takes place in the presence of glutamine and ATP through an activated gamma-phospho-Glu-tRNA(Gln). This is Glutamyl-tRNA(Gln) amidotransferase subunit A from Bacillus cereus (strain ATCC 10987 / NRS 248).